Here is a 498-residue protein sequence, read N- to C-terminus: ATP synthase subunit beta, chloroplastic (498 aa).

Residue 172–179 (GGAGVGKT) participates in ATP binding.

This sequence belongs to the ATPase alpha/beta chains family. As to quaternary structure, F-type ATPases have 2 components, CF(1) - the catalytic core - and CF(0) - the membrane proton channel. CF(1) has five subunits: alpha(3), beta(3), gamma(1), delta(1), epsilon(1). CF(0) has four main subunits: a(1), b(1), b'(1) and c(9-12).

The protein resides in the plastid. The protein localises to the chloroplast thylakoid membrane. It carries out the reaction ATP + H2O + 4 H(+)(in) = ADP + phosphate + 5 H(+)(out). Its function is as follows. Produces ATP from ADP in the presence of a proton gradient across the membrane. The catalytic sites are hosted primarily by the beta subunits. This Lemna minor (Common duckweed) protein is ATP synthase subunit beta, chloroplastic.